The chain runs to 390 residues: tRNA-specific 2-thiouridylase MnmA (390 aa).

Residues 20–27 and leucine 46 each bind ATP; that span reads AMSGGVDS. Residue cysteine 114 is the Nucleophile of the active site. Cysteine 114 and cysteine 211 are oxidised to a cystine. Glycine 138 is an ATP binding site. Residues 161-163 are interaction with tRNA; it reads RDQ. Catalysis depends on cysteine 211, which acts as the Cysteine persulfide intermediate.

This sequence belongs to the MnmA/TRMU family.

It localises to the cytoplasm. It catalyses the reaction S-sulfanyl-L-cysteinyl-[protein] + uridine(34) in tRNA + AH2 + ATP = 2-thiouridine(34) in tRNA + L-cysteinyl-[protein] + A + AMP + diphosphate + H(+). Its function is as follows. Catalyzes the 2-thiolation of uridine at the wobble position (U34) of tRNA, leading to the formation of s(2)U34. The protein is tRNA-specific 2-thiouridylase MnmA of Azorhizobium caulinodans (strain ATCC 43989 / DSM 5975 / JCM 20966 / LMG 6465 / NBRC 14845 / NCIMB 13405 / ORS 571).